We begin with the raw amino-acid sequence, 325 residues long: Melanocortin receptor 5 (325 aa).

The Extracellular portion of the chain corresponds to 1 to 37 (MNSSFHLHFLDLGLNATEGNLSGLSVRNASSPCEDMG). 4 N-linked (GlcNAc...) asparagine glycosylation sites follow: Asn-2, Asn-15, Asn-20, and Asn-28. A helical transmembrane segment spans residues 38-61 (IAVEVFLALGLISLLENILVIGAI). Topologically, residues 62-73 (VRNRNLHIPMYF) are cytoplasmic. Residues 74-97 (FVGSLAVADMLVSLSNFWETITIY) form a helical membrane-spanning segment. At 98-114 (LLTNKHLVMADASVRHL) the chain is on the extracellular side. A helical transmembrane segment spans residues 115 to 138 (DNVFDSMICISVVASMCSLLAIAV). At 139–155 (DRYVTIFCRLRYQRIMT) the chain is on the cytoplasmic side. A helical membrane pass occupies residues 156 to 179 (GRRSGAIIAGIWAFCTSCGTVFIV). The Extracellular portion of the chain corresponds to 180–186 (YYESTYV). A helical membrane pass occupies residues 187 to 211 (VVCLIAMFLTMLLLMASLYTHMFLL). Residues 212-239 (ARTHVRRIAALPGHSSVRQRTGVKGAIT) lie on the Cytoplasmic side of the membrane. A helical membrane pass occupies residues 240 to 265 (LAMLLGVFIICWAPFFLHLILMISCP). The Extracellular portion of the chain corresponds to 266 to 273 (QNLYCSCF). A helical membrane pass occupies residues 274-297 (MSHFNMYLILIMCNSVIDPLIYAF). The Cytoplasmic portion of the chain corresponds to 298–325 (RSQEMRKTFKEIVCFQGFRTPCRFPSTY). Cys-311 carries the S-palmitoyl cysteine lipid modification.

This sequence belongs to the G-protein coupled receptor 1 family.

It is found in the cell membrane. In terms of biological role, receptor for MSH (alpha, beta and gamma) and ACTH. The activity of this receptor is mediated by G proteins which activate adenylate cyclase. This receptor is a possible mediator of the immunomodulation properties of melanocortins. The sequence is that of Melanocortin receptor 5 (MC5R) from Ovis aries (Sheep).